Reading from the N-terminus, the 137-residue chain is Small ribosomal subunit protein uS12 (137 aa).

Position 102 is a 3-methylthioaspartic acid (Asp102).

It belongs to the universal ribosomal protein uS12 family. In terms of assembly, part of the 30S ribosomal subunit. Contacts proteins S8 and S17. May interact with IF1 in the 30S initiation complex.

In terms of biological role, with S4 and S5 plays an important role in translational accuracy. Its function is as follows. Interacts with and stabilizes bases of the 16S rRNA that are involved in tRNA selection in the A site and with the mRNA backbone. Located at the interface of the 30S and 50S subunits, it traverses the body of the 30S subunit contacting proteins on the other side and probably holding the rRNA structure together. The combined cluster of proteins S8, S12 and S17 appears to hold together the shoulder and platform of the 30S subunit. This is Small ribosomal subunit protein uS12 from Mesoplasma florum (strain ATCC 33453 / NBRC 100688 / NCTC 11704 / L1) (Acholeplasma florum).